Consider the following 229-residue polypeptide: Tubulin-specific chaperone B (229 aa).

Residues 170 to 212 (GATKFKEGVWVGVKYDEPVGKNDGSVAGVRYFDCDPKYGGFVR) form the CAP-Gly domain.

This sequence belongs to the TBCB family. Supercomplex made of cofactors A to E. Cofactors A and D function by capturing and stabilizing tubulin in a quasi-native conformation. Cofactor E binds to the cofactor D-tubulin complex; interaction with cofactor C then causes the release of tubulin polypeptides that are committed to the native state.

It localises to the cytoplasm. It is found in the cytoskeleton. In terms of biological role, binds to alpha-tubulin folding intermediates after their interaction with cytosolic chaperonin in the pathway leading from newly synthesized tubulin to properly folded heterodimer. The protein is Tubulin-specific chaperone B of Caenorhabditis elegans.